The following is a 454-amino-acid chain: Chromosomal replication initiator protein DnaA (454 aa).

A domain I, interacts with DnaA modulators region spans residues 1-81; sequence MNNSLWQQCA…PNVVLKVGEA (81 aa). Positions 79–110 are disordered; that stretch reads GEASPTQRDSGSPQRAAATRRKTPNFSSGNTD. Positions 81 to 117 are domain II; that stretch reads ASPTQRDSGSPQRAAATRRKTPNFSSGNTDVEVPFES. Over residues 82-91 the composition is skewed to polar residues; sequence SPTQRDSGSP. A domain III, AAA+ region region spans residues 118–334; the sequence is NIHPEYTFDN…GALNRVVANV (217 aa). ATP is bound by residues Gly162, Gly164, Lys165, and Thr166. The tract at residues 335–454 is domain IV, binds dsDNA; the sequence is QLTGRPITID…YRNLIRTLSS (120 aa).

The protein belongs to the DnaA family. In terms of assembly, oligomerizes as a right-handed, spiral filament on DNA at oriC.

Its subcellular location is the cytoplasm. Functionally, plays an essential role in the initiation and regulation of chromosomal replication. ATP-DnaA binds to the origin of replication (oriC) to initiate formation of the DNA replication initiation complex once per cell cycle. Binds the DnaA box (a 9 base pair repeat at the origin) and separates the double-stranded (ds)DNA. Forms a right-handed helical filament on oriC DNA; dsDNA binds to the exterior of the filament while single-stranded (ss)DNA is stabiized in the filament's interior. The ATP-DnaA-oriC complex binds and stabilizes one strand of the AT-rich DNA unwinding element (DUE), permitting loading of DNA polymerase. After initiation quickly degrades to an ADP-DnaA complex that is not apt for DNA replication. Binds acidic phospholipids. In Idiomarina loihiensis (strain ATCC BAA-735 / DSM 15497 / L2-TR), this protein is Chromosomal replication initiator protein DnaA.